We begin with the raw amino-acid sequence, 497 residues long: Trichoplein keratin filament-binding protein (497 aa).

Coiled coils occupy residues 67 to 140 (HCEK…LLYE), 166 to 271 (ATQK…ELGR), and 327 to 479 (MKQV…AKTM). The interaction with keratin proteins stretch occupies residues 72 to 457 (KEEKRKILEL…WEAARQEEEE (386 aa)). The segment at 167-188 (TQKEEKKQQEATEKQENKRLEN) is disordered. Over residues 168–188 (QKEEKKQQEATEKQENKRLEN) the composition is skewed to basic and acidic residues. A trichohyalin/plectin homology domain region spans residues 258–424 (RQMAALRRKT…KQLAQRAKEE (167 aa)). The tract at residues 441 to 497 (AERQGQEWEAARQEEEEEEEARQAEEHSNALLQQEAKTMAEKGYQPKLHGHLRIAWD) is disordered. Positions 444–453 (QGQEWEAARQ) are enriched in basic and acidic residues. The span at 488–497 (LHGHLRIAWD) shows a compositional bias: basic residues.

It belongs to the TCHP family. In terms of assembly, interacts specifically with keratin proteins including, KRT5, KRT6A, KRT8, KRT14, KRT16 and KRT18. Interacts with KCTD17. Ubiquitinated. Ubiquitination by the BCR(KCTD17) E3 ubiquitin ligase complex results in proteasomal degradation, and induces ciliogenesis. As to expression, expressed in all tissues examined, including brain, liver, small intestine, large intestine, lung and heart. Found concentrated in tubular structures within hepatocytes, and in the apical cortical region and desmosomes of the apical junctional domain in enterocytes of the small intestine. In the hair follicle, localized at the outer root sheath. Also expressed in blood vessels (at protein level).

The protein localises to the cytoplasm. The protein resides in the cytoskeleton. Its subcellular location is the cell membrane. It is found in the mitochondrion. It localises to the microtubule organizing center. The protein localises to the centrosome. Tumor suppressor which has the ability to inhibit cell growth and be pro-apoptotic during cell stress. May act as a 'capping' or 'branching' protein for keratin filaments in the cell periphery. May regulate K8/K18 filament and desmosome organization mainly at the apical or peripheral regions of simple epithelial cells. Is a negative regulator of ciliogenesis. This Mus musculus (Mouse) protein is Trichoplein keratin filament-binding protein.